Reading from the N-terminus, the 104-residue chain is Probable monothiol glutaredoxin 2 (104 aa).

A Glutaredoxin domain is found at 7 to 104 (FEFIENEIKN…NGELEKMLKG (98 aa)). Lys-24 contacts glutathione. Cys-32 provides a ligand contact to [2Fe-2S] cluster. Residues Arg-61, Phe-73, and 86–87 (CD) each bind glutathione.

The protein belongs to the glutaredoxin family. Monothiol subfamily.

The protein is Probable monothiol glutaredoxin 2 (grxC2) of Rickettsia felis (strain ATCC VR-1525 / URRWXCal2) (Rickettsia azadi).